A 122-amino-acid polypeptide reads, in one-letter code: Large ribosomal subunit protein uL18 (122 aa).

The disordered stretch occupies residues 1–25 (MSQISRKQQTQKRHRRLRRHITGTS). Residues 9–21 (QTQKRHRRLRRHI) are compositionally biased toward basic residues.

The protein belongs to the universal ribosomal protein uL18 family. Part of the 50S ribosomal subunit; part of the 5S rRNA/L5/L18/L25 subcomplex. Contacts the 5S and 23S rRNAs.

This is one of the proteins that bind and probably mediate the attachment of the 5S RNA into the large ribosomal subunit, where it forms part of the central protuberance. This Synechococcus sp. (strain CC9605) protein is Large ribosomal subunit protein uL18.